We begin with the raw amino-acid sequence, 354 residues long: Alkanal monooxygenase alpha chain (354 aa).

Belongs to the bacterial luciferase oxidoreductase family. As to quaternary structure, heterodimer of an alpha and a beta chain.

It carries out the reaction a long-chain fatty aldehyde + FMNH2 + O2 = a long-chain fatty acid + hnu + FMN + H2O + 2 H(+). Light-emitting reaction in luminous bacteria. The chain is Alkanal monooxygenase alpha chain (luxA) from Photobacterium leiognathi.